Reading from the N-terminus, the 434-residue chain is Exopolygalacturonase X-1 (434 aa).

The first 22 residues, 1–22 (MKLSHLLTSAVSVLSLGLTVEG), serve as a signal peptide directing secretion. N-linked (GlcNAc...) asparagine glycosylation is found at Asn113, Asn129, and Asn199. The stretch at 231 to 252 (SKNIVIQNSVINNGDDCVSFKP) is one PbH1 1 repeat. Catalysis depends on Asp245, which acts as the Proton donor. Cys247 and Cys264 are disulfide-bonded. Residues Asn253 and Asn265 are each glycosylated (N-linked (GlcNAc...) asparagine). The stretch at 254–274 (STEILVQNLYCNGSHGISVGS) is one PbH1 2 repeat. His268 is a catalytic residue. 5 N-linked (GlcNAc...) asparagine glycosylation sites follow: Asn292, Asn297, Asn329, Asn354, and Asn364. One copy of the PbH1 3 repeat lies at 327-348 (VSNITYEDMYIENVDWAIEITQ). The stretch at 362–405 (PSNLTISDVYISNMYGTTSSARDPNIGTIVCSSPDVCSNIYVEN) is one PbH1 4 repeat. Cys392 and Cys398 form a disulfide bridge. 2 N-linked (GlcNAc...) asparagine glycosylation sites follow: Asn423 and Asn430.

This sequence belongs to the glycosyl hydrolase 28 family.

The protein localises to the secreted. The catalysed reaction is [(1-&gt;4)-alpha-D-galacturonosyl](n) + H2O = alpha-D-galacturonate + [(1-&gt;4)-alpha-D-galacturonosyl](n-1). Functionally, specific in hydrolyzing the terminal glycosidic bond of polygalacturonic acid and oligogalacturonates. The chain is Exopolygalacturonase X-1 (pgaX-1) from Emericella nidulans (strain FGSC A4 / ATCC 38163 / CBS 112.46 / NRRL 194 / M139) (Aspergillus nidulans).